We begin with the raw amino-acid sequence, 344 residues long: Methylthioribose-1-phosphate isomerase (344 aa).

Substrate contacts are provided by residues 46-48 (RGA), Arg-89, and Gln-196. Asp-237 serves as the catalytic Proton donor. Substrate is bound at residue 247–248 (NK).

The protein belongs to the eIF-2B alpha/beta/delta subunits family. MtnA subfamily.

It catalyses the reaction 5-(methylsulfanyl)-alpha-D-ribose 1-phosphate = 5-(methylsulfanyl)-D-ribulose 1-phosphate. It participates in amino-acid biosynthesis; L-methionine biosynthesis via salvage pathway; L-methionine from S-methyl-5-thio-alpha-D-ribose 1-phosphate: step 1/6. Its function is as follows. Catalyzes the interconversion of methylthioribose-1-phosphate (MTR-1-P) into methylthioribulose-1-phosphate (MTRu-1-P). This is Methylthioribose-1-phosphate isomerase from Syntrophotalea carbinolica (strain DSM 2380 / NBRC 103641 / GraBd1) (Pelobacter carbinolicus).